Consider the following 642-residue polypeptide: Mini-chromosome maintenance complex-binding protein (642 aa).

A compositionally biased stretch (polar residues) spans 151-161 (ARVSPSTSYTP). The disordered stretch occupies residues 151–196 (ARVSPSTSYTPSRHKRSYEDDEDMDLQPSKQKEQHPGSRQAGGLGG). Ser154 carries the post-translational modification Phosphoserine. At Thr160 the chain carries Phosphothreonine. Ser167 and Ser298 each carry phosphoserine.

This sequence belongs to the MCMBP family. In terms of assembly, interacts with the MCM complex: associates with the MCM3-7 complex which lacks MCM2, while it does not interact with the MCM complex when MCM2 is present (MCM2-7 complex). Interacts with the RPA complex, when composed of all RPA1, RPA2 and RPA3 components, but not with RPA1 or RPA2 alone.

It is found in the nucleus. In terms of biological role, associated component of the MCM complex that acts as a regulator of DNA replication. Binds to the MCM complex during late S phase and promotes the disassembly of the MCM complex from chromatin, thereby acting as a key regulator of pre-replication complex (pre-RC) unloading from replicated DNA. Can dissociate the MCM complex without addition of ATP; probably acts by destabilizing interactions of each individual subunits of the MCM complex. Required for sister chromatid cohesion. In Mus musculus (Mouse), this protein is Mini-chromosome maintenance complex-binding protein (Mcmbp).